The following is a 139-amino-acid chain: Large ribosomal subunit protein uL16c (139 aa).

A disordered region spans residues Met1–Lys20.

This sequence belongs to the universal ribosomal protein uL16 family. As to quaternary structure, part of the 50S ribosomal subunit.

It is found in the plastid. The protein localises to the chloroplast. The polypeptide is Large ribosomal subunit protein uL16c (Pleurastrum terricola (Filamentous green alga)).